The sequence spans 142 residues: Nucleoside diphosphate kinase (142 aa).

The ATP site is built by Lys11, Phe59, Arg87, Thr93, Arg104, and Asn114. His117 serves as the catalytic Pros-phosphohistidine intermediate.

It belongs to the NDK family. As to quaternary structure, homotetramer. Requires Mg(2+) as cofactor.

Its subcellular location is the cytoplasm. It carries out the reaction a 2'-deoxyribonucleoside 5'-diphosphate + ATP = a 2'-deoxyribonucleoside 5'-triphosphate + ADP. It catalyses the reaction a ribonucleoside 5'-diphosphate + ATP = a ribonucleoside 5'-triphosphate + ADP. Functionally, major role in the synthesis of nucleoside triphosphates other than ATP. The ATP gamma phosphate is transferred to the NDP beta phosphate via a ping-pong mechanism, using a phosphorylated active-site intermediate. This Aeromonas salmonicida (strain A449) protein is Nucleoside diphosphate kinase.